The chain runs to 332 residues: L-lactate dehydrogenase A chain (332 aa).

Residue Ala-2 is modified to N-acetylalanine. Lys-5 carries the N6-acetyllysine; alternate modification. Lys-5 bears the N6-succinyllysine; alternate mark. Residue Lys-14 is modified to N6-acetyllysine. An NAD(+)-binding site is contributed by 29–57; that stretch reads GAVGMACAISILMKELADEIALVDVMEDK. Lys-57 is modified (N6-acetyllysine; alternate). Lys-57 participates in a covalent cross-link: Glycyl lysine isopeptide (Lys-Gly) (interchain with G-Cter in SUMO2); alternate. N6-acetyllysine is present on Lys-81. Arg-99 contributes to the NAD(+) binding site. A substrate-binding site is contributed by Arg-106. Residue Lys-118 is modified to N6-acetyllysine; alternate. Lys-118 carries the post-translational modification N6-succinyllysine; alternate. The residue at position 126 (Lys-126) is an N6-acetyllysine. Residue Asn-138 coordinates NAD(+). Residues Asn-138 and Arg-169 each coordinate substrate. His-193 (proton acceptor) is an active-site residue. An N6-acetyllysine mark is found at Lys-224 and Lys-232. Phosphotyrosine is present on Tyr-239. Lys-243 bears the N6-acetyllysine mark. A substrate-binding site is contributed by Thr-248. Position 309 is a phosphothreonine (Thr-309). Lys-318 carries the post-translational modification N6-acetyllysine; alternate. Lys-318 is subject to N6-succinyllysine; alternate. At Thr-322 the chain carries Phosphothreonine.

It belongs to the LDH/MDH superfamily. LDH family. As to quaternary structure, homotetramer. Interacts with PTEN upstream reading frame protein MP31. In terms of processing, ISGylated.

The protein resides in the cytoplasm. The enzyme catalyses (S)-lactate + NAD(+) = pyruvate + NADH + H(+). It participates in fermentation; pyruvate fermentation to lactate; (S)-lactate from pyruvate: step 1/1. Its function is as follows. Interconverts simultaneously and stereospecifically pyruvate and lactate with concomitant interconversion of NADH and NAD(+). The polypeptide is L-lactate dehydrogenase A chain (LDHA) (Sus scrofa (Pig)).